The chain runs to 486 residues: Achaete-scute complex protein T8 (486 aa).

2 disordered regions span residues 1 to 26 (MAAL…GIKT) and 75 to 158 (AAST…LPLP). Polar residues predominate over residues 75–86 (AASTTNTTPISS). Residues 159-223 (QAVARRNARE…RMAVEYIRSL (65 aa)) enclose the bHLH domain.

Efficient DNA binding requires dimerization with another bHLH protein. L(1)SC, SC and AC strongly label the presumptive stomatogastric nervous system, while ASE is more prominent in the presumptive procephalic lobe.

In terms of biological role, involved in the determination of the neuronal precursors of optic lobes in the central nervous system. The polypeptide is Achaete-scute complex protein T8 (ase) (Drosophila melanogaster (Fruit fly)).